We begin with the raw amino-acid sequence, 343 residues long: Diterpene cyclase DtcycB (343 aa).

Positions 219, 223, and 227 each coordinate Mg(2+).

Belongs to the terpene synthase family. Homodimer. The cofactor is Mg(2+).

The enzyme catalyses (2E,6E,10E)-geranylgeranyl diphosphate + H2O = (R)-nephthenol + diphosphate. It carries out the reaction (2E,6E,10E)-geranylgeranyl diphosphate = (R)-cembrene A + diphosphate. The catalysed reaction is (2E,6E,10E)-geranylgeranyl diphosphate + H2O = (1S,4E,8E,12E)-2,2,5,9,13-pentamethylcyclopentadeca-4,8,12-trien-1-ol + diphosphate. Diterpene cyclases that can form multiple diterpene products. The polypeptide is Diterpene cyclase DtcycB (Streptomyces sp).